A 121-amino-acid polypeptide reads, in one-letter code: MPRVKRGTKRRAKRKKILERASGYYLTKSKLYRSAKESVERALKFAYTGRKQKKRQYRSIWIVRIGAAAKLNGLSYSRFISGLKKAGVELDRKMLSEIAIHDPQAFAVLAEQAKAAQPAAA.

It belongs to the bacterial ribosomal protein bL20 family.

Binds directly to 23S ribosomal RNA and is necessary for the in vitro assembly process of the 50S ribosomal subunit. It is not involved in the protein synthesizing functions of that subunit. This is Large ribosomal subunit protein bL20 from Koribacter versatilis (strain Ellin345).